We begin with the raw amino-acid sequence, 496 residues long: MFS transporter cpaT (496 aa).

Residues 1–45 (MGHQEEPPRICKTPSGHEQGEGPAEKTSKPSTEEVGWDGPTDPAR) form a disordered region. Residues 18 to 32 (EQGEGPAEKTSKPST) show a composition bias toward basic and acidic residues. N48 is a glycosylation site (N-linked (GlcNAc...) asparagine). The helical transmembrane segment at 58–78 (MGIISYLTFLTPLTSSIVAPA) threads the bilayer. The N-linked (GlcNAc...) asparagine glycan is linked to N90. Helical transmembrane passes span 93–113 (LASF…LFLA), 130–150 (FIFT…ALLV), 154–174 (FAGI…ADMF), 180–200 (GVAM…GPIA), and 212–232 (WVFW…LFVL). Residue N252 is glycosylated (N-linked (GlcNAc...) asparagine). Transmembrane regions (helical) follow at residues 288 to 308 (VALF…LFTT), 325 to 345 (GLVY…FGAL), 367 to 387 (LPPL…YGWS), 395 to 415 (IMPI…LLPI), 427 to 449 (AASA…PLAG), and 463 to 483 (SLLG…YFYG).

The protein belongs to the major facilitator superfamily.

It localises to the membrane. MFS transporter; part of the gene cluster that mediates the biosynthesis of the fungal neurotoxin cyclopiazonic acid (CPA), a nanomolar inhibitor of Ca(2+)-ATPase with a unique pentacyclic indole tetramic acid scaffold. In Aspergillus oryzae (Yellow koji mold), this protein is MFS transporter cpaT.